Reading from the N-terminus, the 222-residue chain is Thiol:disulfide interchange protein DsbL (222 aa).

An N-terminal signal peptide occupies residues 1–27 (MSKLGISSLFKTILLTAALAVSFTASA). One can recognise a Thioredoxin domain in the interval 28–221 (FTEGTDYMVL…MADLIRELAS (194 aa)). Residues C56 and C59 are joined by a disulfide bond.

Belongs to the thioredoxin family. DsbL subfamily. Interacts with DsbI.

The protein localises to the periplasm. Involved in disulfide-bond formation. Acts by transferring its disulfide bond to other proteins. Part of a redox system composed of DsbI and DsbL that mediates formation of an essential disulfide bond in AssT. The polypeptide is Thiol:disulfide interchange protein DsbL (Escherichia coli O6:H1 (strain CFT073 / ATCC 700928 / UPEC)).